We begin with the raw amino-acid sequence, 237 residues long: Proteasome subunit beta 2 (237 aa).

A compositionally biased stretch (polar residues) spans 1–14 (MNNWSQGSTPQGSD). A propeptide spans 1–42 (MNNWSQGSTPQGSDPSPYAPELGSLPDGSQSDDHGDTVNKTG) (removed in mature form; by autocatalysis). Residues 1 to 45 (MNNWSQGSTPQGSDPSPYAPELGSLPDGSQSDDHGDTVNKTGTTT) are disordered. Threonine 43 serves as the catalytic Nucleophile.

It belongs to the peptidase T1B family. The 20S proteasome core is composed of 14 alpha and 14 beta subunits that assemble into four stacked heptameric rings, resulting in a barrel-shaped structure. The two inner rings, each composed of seven catalytic beta subunits, are sandwiched by two outer rings, each composed of seven alpha subunits. The catalytic chamber with the active sites is on the inside of the barrel. Has a gated structure, the ends of the cylinder being occluded by the N-termini of the alpha-subunits. Is capped at one or both ends by the proteasome regulatory ATPase, PAN.

It is found in the cytoplasm. The enzyme catalyses Cleavage of peptide bonds with very broad specificity.. Its activity is regulated as follows. The formation of the proteasomal ATPase PAN-20S proteasome complex, via the docking of the C-termini of PAN into the intersubunit pockets in the alpha-rings, triggers opening of the gate for substrate entry. Interconversion between the open-gate and close-gate conformations leads to a dynamic regulation of the 20S proteasome proteolysis activity. Component of the proteasome core, a large protease complex with broad specificity involved in protein degradation. This chain is Proteasome subunit beta 2, found in Haloterrigena turkmenica (strain ATCC 51198 / DSM 5511 / JCM 9101 / NCIMB 13204 / VKM B-1734 / 4k) (Halococcus turkmenicus).